The following is a 159-amino-acid chain: C-type lectin 1 (159 aa).

A signal peptide spans 1-23; the sequence is MGRFIFISFGLLVVFFFLSGAKG. 4 cysteine pairs are disulfide-bonded: C26–C37, C54–C155, C61–C157, and C130–C147. Residues 33–156 enclose the C-type lectin domain; it reads MYGLCYKIFD…CKVKNAFLCQ (124 aa). N118 carries N-linked (GlcNAc...) asparagine glycosylation. The Sugar-binding signature appears at 119 to 121; the sequence is LTD. Ca(2+) contacts are provided by D121, D127, and N143.

It belongs to the true venom lectin family. As to quaternary structure, homodimer; disulfide-linked. In terms of tissue distribution, expressed by the venom gland.

It is found in the secreted. In terms of biological role, lectin which recognizes specific carbohydrate structures and agglutinates a variety of animal cells by binding to cell-surface glycoproteins and glycolipids. May be a calcium-dependent lectin. This chain is C-type lectin 1, found in Bitis gabonica (Gaboon adder).